A 199-amino-acid chain; its full sequence is Recombination protein RecR (199 aa).

The C4-type zinc finger occupies 56–71 (CRSCFNVAQSELCRIC). Residues 79 to 174 (SSICVVEEPK…KVTRLASGLP (96 aa)) enclose the Toprim domain.

Belongs to the RecR family.

Functionally, may play a role in DNA repair. It seems to be involved in an RecBC-independent recombinational process of DNA repair. It may act with RecF and RecO. In Frankia casuarinae (strain DSM 45818 / CECT 9043 / HFP020203 / CcI3), this protein is Recombination protein RecR.